The primary structure comprises 1154 residues: DNA-directed RNA polymerase, mitochondrial (1154 aa).

The N-terminal 30 residues, 1 to 30, are a transit peptide targeting the mitochondrion; the sequence is MLRRKIQTYLSRSHIRRGLCGLRFFQTQRL. The interval 221-243 is disordered; it reads ESENGKDQNGDSSLKEKQPDVET. Residues 223 to 240 are compositionally biased toward basic and acidic residues; sequence ENGKDQNGDSSLKEKQPD. Active-site residues include Asp821, Lys890, and Asp1061.

The protein belongs to the phage and mitochondrial RNA polymerase family.

The protein localises to the mitochondrion. The enzyme catalyses RNA(n) + a ribonucleoside 5'-triphosphate = RNA(n+1) + diphosphate. In terms of biological role, DNA-dependent RNA polymerase catalyzes the transcription of DNA into RNA using the four ribonucleoside triphosphates as substrates. Combines in the mitochondrion with mitochondrial transcription factor mtf1 as a holoenzyme to recognize and initiate transcription at the core mitochondrial promoters. This chain is DNA-directed RNA polymerase, mitochondrial (rpo41), found in Schizosaccharomyces pombe (strain 972 / ATCC 24843) (Fission yeast).